A 334-amino-acid polypeptide reads, in one-letter code: MATLKEKLIAPVAEEETTIPNNKITVVGVGQVGMACAISILGKSLTDELALVDVLEDKLKGEMMDLQHGSLFLQTPKIVADKDYSVTANSKIVVVTAGVRQQEGESRLNLVQRNVNVFKFIIPQIVKYSPDCIIIVVSNPVDILTYVTWKLSGLPKHRVIGSGCNLDSARFRYLMAEKLGVHPSSCHGWILGEHGDSSVAVWSGVNVAGVSLQELNPEMGTDNDSENWKEVHKMVVESAYEVIKLKGYTNWAIGLSVADLIESMLKNLSRIHPVSTMVQGMYGIENEVFLSLPCVLNARGLTSVINQKLKDDEVAQLKNSADTLWGIQKDLKDL.

Ala-2 carries the N-acetylalanine modification. An N6-acetyllysine modification is found at Lys-7. Residues 30–58 and Arg-100 each bind NAD(+); that span reads GQVG…LEDK. Position 44 is a phosphoserine (Ser-44). An N6-acetyllysine modification is found at Lys-58. A substrate-binding site is contributed by Arg-107. N6-acetyllysine is present on Lys-119. Asn-139 contributes to the NAD(+) binding site. Substrate is bound by residues Asn-139 and Arg-170. The active-site Proton acceptor is the His-194. Tyr-240 is modified (phosphotyrosine). Residue Thr-249 coordinates substrate. Lys-329 bears the N6-acetyllysine mark.

It belongs to the LDH/MDH superfamily. LDH family. As to quaternary structure, homotetramer. Interacts with PTEN upstream reading frame protein MP31; the interaction leads to inhibition of mitochondrial lactate dehydrogenase activity, preventing conversion of lactate to pyruvate in mitochondria.

The protein localises to the cytoplasm. It localises to the mitochondrion inner membrane. It catalyses the reaction (S)-lactate + NAD(+) = pyruvate + NADH + H(+). The protein operates within fermentation; pyruvate fermentation to lactate; (S)-lactate from pyruvate: step 1/1. Functionally, interconverts simultaneously and stereospecifically pyruvate and lactate with concomitant interconversion of NADH and NAD(+). In Sus scrofa (Pig), this protein is L-lactate dehydrogenase B chain (LDHB).